The primary structure comprises 339 residues: tRNA N6-adenosine threonylcarbamoyltransferase (339 aa).

Fe cation-binding residues include His-111 and His-115. Substrate is bound by residues Leu-134 to Gly-138, Asp-167, Gly-180, and Asn-272. Asp-300 provides a ligand contact to Fe cation.

The protein belongs to the KAE1 / TsaD family. Requires Fe(2+) as cofactor.

The protein resides in the cytoplasm. It catalyses the reaction L-threonylcarbamoyladenylate + adenosine(37) in tRNA = N(6)-L-threonylcarbamoyladenosine(37) in tRNA + AMP + H(+). Functionally, required for the formation of a threonylcarbamoyl group on adenosine at position 37 (t(6)A37) in tRNAs that read codons beginning with adenine. Is involved in the transfer of the threonylcarbamoyl moiety of threonylcarbamoyl-AMP (TC-AMP) to the N6 group of A37, together with TsaE and TsaB. TsaD likely plays a direct catalytic role in this reaction. This Sodalis glossinidius (strain morsitans) protein is tRNA N6-adenosine threonylcarbamoyltransferase.